Here is a 167-residue protein sequence, read N- to C-terminus: MSERDILIERLERKLAEKERELVELRRMNREELEKIKREIAMEAKEEVLREVHKLLQNSQIQRLSEVDSKIVELRKAMESIITELAYIKGELKGLQEKGESKVERKEIIEEKIQKAMVFENEPLYLEEKEERKPAKESKRREHDVIIPEGKKEERTDDGEDGLIVCD.

A coiled-coil region spans residues 70 to 118 (KIVELRKAMESIITELAYIKGELKGLQEKGESKVERKEIIEEKIQKAMV). A compositionally biased stretch (basic and acidic residues) spans 128–155 (EKEERKPAKESKRREHDVIIPEGKKEER). Positions 128 to 167 (EKEERKPAKESKRREHDVIIPEGKKEERTDDGEDGLIVCD) are disordered.

This is an uncharacterized protein from Archaeoglobus fulgidus (strain ATCC 49558 / DSM 4304 / JCM 9628 / NBRC 100126 / VC-16).